The primary structure comprises 321 residues: Beta-ketoacyl-[acyl-carrier-protein] synthase III (321 aa).

Catalysis depends on residues cysteine 114 and histidine 248. The interval 249–253 (QANKR) is ACP-binding. Asparagine 278 is a catalytic residue.

Belongs to the thiolase-like superfamily. FabH family. In terms of assembly, homodimer.

Its subcellular location is the cytoplasm. It catalyses the reaction malonyl-[ACP] + acetyl-CoA + H(+) = 3-oxobutanoyl-[ACP] + CO2 + CoA. It functions in the pathway lipid metabolism; fatty acid biosynthesis. In terms of biological role, catalyzes the condensation reaction of fatty acid synthesis by the addition to an acyl acceptor of two carbons from malonyl-ACP. Catalyzes the first condensation reaction which initiates fatty acid synthesis and may therefore play a role in governing the total rate of fatty acid production. Possesses both acetoacetyl-ACP synthase and acetyl transacylase activities. Its substrate specificity determines the biosynthesis of branched-chain and/or straight-chain of fatty acids. This chain is Beta-ketoacyl-[acyl-carrier-protein] synthase III, found in Sphingopyxis alaskensis (strain DSM 13593 / LMG 18877 / RB2256) (Sphingomonas alaskensis).